We begin with the raw amino-acid sequence, 109 residues long: Protein ELF4-LIKE 3 (109 aa).

Residues 88-109 (SMEASSEGDSSEGRGNRRIRPA) form a disordered region.

The protein belongs to the EARLY FLOWERING 4 family. In terms of assembly, homodimer.

Its subcellular location is the nucleus. In terms of biological role, component of the central CCA1/LHY-TOC1 feedback loop in the circadian clock that promotes clock accuracy and is required for sustained rhythms in the absence of daily light/dark cycles. The chain is Protein ELF4-LIKE 3 (EFL3) from Arabidopsis thaliana (Mouse-ear cress).